Reading from the N-terminus, the 110-residue chain is Insulin (110 aa).

An N-terminal signal peptide occupies residues 1–24; the sequence is MASLAALLPLLALLVLCRLDPAQA. 3 disulfide bridges follow: cysteine 31-cysteine 96, cysteine 43-cysteine 109, and cysteine 95-cysteine 100. Positions 57–87 are cleaved as a propeptide — c peptide; the sequence is EVEELQVGQAELGGGPGAGGLQPSALELALQ.

The protein belongs to the insulin family. Heterodimer of a B chain and an A chain linked by two disulfide bonds.

It localises to the secreted. Its function is as follows. Insulin decreases blood glucose concentration. It increases cell permeability to monosaccharides, amino acids and fatty acids. It accelerates glycolysis, the pentose phosphate cycle, and glycogen synthesis in liver. The sequence is that of Insulin (INS) from Oryctolagus cuniculus (Rabbit).